Here is a 313-residue protein sequence, read N- to C-terminus: Ribosomal RNA small subunit methyltransferase H (313 aa).

Residues 34 to 36 (GGH), Asp-53, Phe-80, Asp-101, and Gln-108 each bind S-adenosyl-L-methionine.

The protein belongs to the methyltransferase superfamily. RsmH family.

It is found in the cytoplasm. It catalyses the reaction cytidine(1402) in 16S rRNA + S-adenosyl-L-methionine = N(4)-methylcytidine(1402) in 16S rRNA + S-adenosyl-L-homocysteine + H(+). Its function is as follows. Specifically methylates the N4 position of cytidine in position 1402 (C1402) of 16S rRNA. This is Ribosomal RNA small subunit methyltransferase H from Lacticaseibacillus paracasei (strain ATCC 334 / BCRC 17002 / CCUG 31169 / CIP 107868 / KCTC 3260 / NRRL B-441) (Lactobacillus paracasei).